A 457-amino-acid chain; its full sequence is RuvB-like helicase 1 (457 aa).

Position 72 to 79 (72 to 79 (GAPGTGKT)) interacts with ATP.

Belongs to the RuvB family. May form heterododecamers with RVB2. Component of the SWR1 chromatin remodeling complex, the INO80 chromatin remodeling complex, and of the R2TP complex.

The protein localises to the nucleus. The catalysed reaction is ATP + H2O = ADP + phosphate + H(+). DNA helicase which participates in several chromatin remodeling complexes, including the SWR1 and the INO80 complexes. The SWR1 complex mediates the ATP-dependent exchange of histone H2A for the H2A variant HZT1 leading to transcriptional regulation of selected genes by chromatin remodeling. The INO80 complex remodels chromatin by shifting nucleosomes and is involved in DNA repair. Also involved in pre-rRNA processing. This chain is RuvB-like helicase 1 (RBV1), found in Debaryomyces hansenii (strain ATCC 36239 / CBS 767 / BCRC 21394 / JCM 1990 / NBRC 0083 / IGC 2968) (Yeast).